The chain runs to 195 residues: Probable septum site-determining protein MinC (195 aa).

The protein belongs to the MinC family. Interacts with MinD and FtsZ.

Its function is as follows. Cell division inhibitor that blocks the formation of polar Z ring septums. Rapidly oscillates between the poles of the cell to destabilize FtsZ filaments that have formed before they mature into polar Z rings. Prevents FtsZ polymerization. This Helicobacter pylori (strain G27) protein is Probable septum site-determining protein MinC.